A 238-amino-acid chain; its full sequence is Nuclear transcription factor Y subunit B-9 (238 aa).

The DNA-binding element occupies M64–I70. A subunit association domain (SAD) region spans residues I91–V102. Residues R203–K238 are disordered. Low complexity predominate over residues G208–G227.

This sequence belongs to the NFYB/HAP3 subunit family. Heterotrimeric transcription factor composed of three components, NF-YA, NF-YB and NF-YC. NF-YB and NF-YC must interact and dimerize for NF-YA association and DNA binding. Interacts with PRN1. In terms of tissue distribution, expressed in green siliques. Present in etiolated seedlings.

Its subcellular location is the nucleus. Functionally, component of the NF-Y/HAP transcription factor complex. The NF-Y complex stimulates the transcription of various genes by recognizing and binding to a CCAAT motif in promoters. Acts as a central regulator of the embryogenesis. Required for the speciation of cotyledon identity and the completion of embryo maturation. Controls seed storage protein genes through the regulation of FUS3 and ABI3. Involved in the blue light (BL) and abscisic acid (ABA) signaling pathways. The sequence is that of Nuclear transcription factor Y subunit B-9 (NFYB9) from Arabidopsis thaliana (Mouse-ear cress).